A 253-amino-acid polypeptide reads, in one-letter code: Uroplakin-3b-like protein 1 (253 aa).

A signal peptide spans 1–26 (MGLGRGQSPLLMALLLLLACLQMGMS). Residues 27 to 194 (LERISYVPQL…PGPQTAGTVV (168 aa)) lie on the Extracellular side of the membrane. 2 N-linked (GlcNAc...) asparagine glycosylation sites follow: Asn78 and Asn130. Residues 195-215 (IIAILSVLLAVLLAALLALLI) traverse the membrane as a helical segment. Topologically, residues 216 to 253 (FTWYDTCGSTPISGPGELVFVRKYDTHHMSRPSTVGGS) are cytoplasmic.

It belongs to the uroplakin-3 family.

It is found in the membrane. This is Uroplakin-3b-like protein 1 from Bos taurus (Bovine).